Reading from the N-terminus, the 815-residue chain is Kinesin heavy chain (815 aa).

The region spanning 11–329 (GVQVFCRIRP…LLFGARAKTI (319 aa)) is the Kinesin motor domain. Position 88–95 (88–95 (GQTSSGKT)) interacts with ATP. Coiled coils occupy residues 335–374 (INEE…RWRA), 422–554 (PITD…LDEC), and 695–785 (PAQK…RMNA). The disordered stretch occupies residues 788 to 815 (IVKPIRPGQVYTSPSAGMSQGAPNGSNA). Residues 797–815 (VYTSPSAGMSQGAPNGSNA) are compositionally biased toward polar residues.

Belongs to the TRAFAC class myosin-kinesin ATPase superfamily. Kinesin family. Kinesin subfamily. In terms of assembly, oligomer composed of two heavy chains and two light chains.

It is found in the cytoplasm. The protein localises to the cytoskeleton. Microtubule-dependent motor protein required for organelle transport. Plays a role in endosome transport. Required for the transport of mitochondria along the axon of motor neurons. Involved in the nuclear migration of hyp7 hypodermal precursor cells. Required for the formation of dendritic branches of PVD sensory neurons. In non-ciliated neurons such as the PVD and PHC neurons, required for the organization of minus-end out microtubules in dendrites. Also required for the minus-end out orientation of microtubules in dendrites of AQR gas-sensing neurons. Involved in the localization of unc-33 to neurites. Positively regulates cilium position and dendrite morphogenesis in the postembryonic AQR and PQR gas-sensing neurons. Plays a more prominent role in regulating dendrite morphogenesis in AQR than in PQR neurons. Plays a role in regulating the localization of grdn-1 to the distal dendrites of AQR sensory neurons. In Caenorhabditis elegans, this protein is Kinesin heavy chain.